Here is a 597-residue protein sequence, read N- to C-terminus: MEPAGHSSATHNIVVPNANPTQPQPLAPAMREEGATLSPPNTWSSSSVEFLDDADDNRLLFTCTFTLPHGTVLSSATYADGFHEQYLTIGDNFLARLEPKGQSFILSAAAASVKQRIFARVTMPDGALRACELLCEFETDRAKITVLALRSAFSLQASHVSSNFHVFTFITKHSSTCALTHIDYASIPYLGLLPTDLIGKSLLAFVYSPDVHVVRQAHIDLHNSRGKIVKSIADLRLVAHNGSILRCQTEWSAYVNPWTRKMELVVARHRICSLPIGDSDVISSPPPGIQSNTLPPVMAKTFEDELRTIMNKPVPSTSRHSHHHHHSSLKDQNQGFPANIDLGAYIDKIVEQLVVNSTAQQQQKVAVAAAAAAQAAQAAVVATAQIRKVASAPPTTSTDPPLSYTQINCLENVHRLLKSQSRPESPAKQDEPFDEKKYPPQTPLTREALTLHTKRFEDEYKDTWCRRLKRLSDDVPSSPPAKRTTPIHWTSSSQNHYRTMAPAPPPPPGKNYQITYTPLDDLTDQKSTNTKSDVENVAYPISGSKFSTPMRLSIDGLLPRGATSTGGASPTSGTNSPPVFPKTSSSSSLLMLRDSQN.

Residues 1–44 (MEPAGHSSATHNIVVPNANPTQPQPLAPAMREEGATLSPPNTWS) form a disordered region. Positions 155-223 (LQASHVSSNF…VRQAHIDLHN (69 aa)) constitute a PAS domain. Disordered stretches follow at residues 313-335 (PVPS…QNQG), 418-450 (KSQS…EALT), 473-509 (DDVP…PPPG), and 555-597 (DGLL…DSQN). A compositionally biased stretch (basic and acidic residues) spans 425–438 (SPAKQDEPFDEKKY). The span at 487–497 (IHWTSSSQNHY) shows a compositional bias: polar residues. The segment covering 561 to 577 (GATSTGGASPTSGTNSP) has biased composition (low complexity).

It is found in the nucleus. It localises to the cytoplasm. Its function is as follows. Transcriptional repressor which interacts with the promoter region of target genes. Has a specific role in developmental timing where it regulates temporal expression of a number of miRNAs and mRNAs. Controls temporal cell fate transition during embryonic and early larval development by restricting the expression of specific miRNAs, including let-7, miR-48, lin-4, miR-35 and miR-58. Restricts the accumulation of lin-29 in the hypodermis to the larval L4 stage, thus controlling terminal differentiation of seam cells. Has a role in the miRNA-mediated specification of asymmetric gene expression patterns in gustatory neurons. May also regulate genes involved in other biological processes including transport, small molecule metabolism, and growth. Inhibits dauer formation, by antagonizing daf-12. Specifically required for maintaining the timing of larval development and molting cycle rhythms. The polypeptide is Period protein homolog lin-42 (Caenorhabditis elegans).